Reading from the N-terminus, the 469-residue chain is Ubiquitin carboxyl-terminal hydrolase MINDY-1 (469 aa).

Positions 1–85 are disordered; that stretch reads MEHHQPEDPA…APPGPTLGTL (85 aa). Residues 34-53 show a composition bias toward basic and acidic residues; that stretch reads HPQDTDARDADGEAGEREPA. The residue at position 103 (S103) is a Phosphoserine. The active-site Nucleophile is C137. H319 (proton acceptor) is an active-site residue. The segment at 388–426 is ubiquitin-binding domain (UBD); the sequence is QVDQDYLIALSLQQQQPRGTLGLTDLELAQQLQQEEYQQ. Positions 428 to 469 are disordered; that stretch reads QAAQPVWMRTRALSPQGRGATSGRPAGERRQRPKHESDCILL. Position 441 is a phosphoserine (S441). A compositionally biased stretch (basic and acidic residues) spans 453 to 469; sequence AGERRQRPKHESDCILL.

The protein belongs to the MINDY deubiquitinase family. FAM63 subfamily.

The enzyme catalyses Thiol-dependent hydrolysis of ester, thioester, amide, peptide and isopeptide bonds formed by the C-terminal Gly of ubiquitin (a 76-residue protein attached to proteins as an intracellular targeting signal).. Its function is as follows. Hydrolase that can specifically remove 'Lys-48'-linked conjugated ubiquitin from proteins. Has exodeubiquitinase activity and has a preference for long polyubiquitin chains. May play a regulatory role at the level of protein turnover. This is Ubiquitin carboxyl-terminal hydrolase MINDY-1 (MINDY1) from Pongo abelii (Sumatran orangutan).